The chain runs to 24 residues: Defensin D6 (24 aa).

It belongs to the DEFL family. Group IV subfamily. Distributed in the epidermal cell layer of leaves and in the subepidermal layer region of stems. Not in roots.

The protein localises to the secreted. Its subcellular location is the cell wall. In terms of biological role, antimicrobial peptide. Active against Fusarium spp., Gram-positive and Gram-negative bacterial pathogens. This chain is Defensin D6, found in Spinacia oleracea (Spinach).